Consider the following 78-residue polypeptide: Conotoxin ArMKLT2-0312 (78 aa).

A signal peptide spans 1–22; that stretch reads MKLTCVLIIAVLFLTACQLITA. A propeptide spanning residues 23–45 is cleaved from the precursor; it reads DYSRDKQEYRAVRLRDAMRYSRV. Q48 carries the pyrrolidone carboxylic acid modification. 3 disulfide bridges follow: C49/C62, C56/C67, and C61/C75.

Belongs to the conotoxin O1 superfamily. As to expression, expressed by the venom duct.

Its subcellular location is the secreted. This chain is Conotoxin ArMKLT2-0312, found in Conus arenatus (Sand-dusted cone).